A 508-amino-acid polypeptide reads, in one-letter code: 2-isopropylmalate synthase (508 aa).

Residues 5-267 (IKIFDTTLRD…THRIDTTQIY (263 aa)) enclose the Pyruvate carboxyltransferase domain. Residues aspartate 14, histidine 202, histidine 204, and asparagine 238 each contribute to the Mn(2+) site. Residues 390–508 (VIDSFQINSG…SEIGESIISQ (119 aa)) form a regulatory domain region.

Belongs to the alpha-IPM synthase/homocitrate synthase family. LeuA type 1 subfamily. In terms of assembly, homodimer. The cofactor is Mn(2+).

It is found in the cytoplasm. It catalyses the reaction 3-methyl-2-oxobutanoate + acetyl-CoA + H2O = (2S)-2-isopropylmalate + CoA + H(+). The protein operates within amino-acid biosynthesis; L-leucine biosynthesis; L-leucine from 3-methyl-2-oxobutanoate: step 1/4. Catalyzes the condensation of the acetyl group of acetyl-CoA with 3-methyl-2-oxobutanoate (2-ketoisovalerate) to form 3-carboxy-3-hydroxy-4-methylpentanoate (2-isopropylmalate). This Ruminiclostridium cellulolyticum (strain ATCC 35319 / DSM 5812 / JCM 6584 / H10) (Clostridium cellulolyticum) protein is 2-isopropylmalate synthase.